Here is a 268-residue protein sequence, read N- to C-terminus: WUSCHEL-related homeobox 12 (268 aa).

The segment covering 1 to 16 (MNQEGASHSPSSTSTE) has biased composition (polar residues). Disordered stretches follow at residues 1-22 (MNQE…RARW) and 173-198 (SDHN…QNSN). Positions 17-81 (PVRARWSPKP…NRRSRSRRRH (65 aa)) form a DNA-binding region, homeobox; WUS-type.

Belongs to the WUS homeobox family.

It is found in the nucleus. Its function is as follows. Transcription factor which may be involved in developmental processes. The sequence is that of WUSCHEL-related homeobox 12 (WOX12) from Arabidopsis thaliana (Mouse-ear cress).